We begin with the raw amino-acid sequence, 268 residues long: Proenkephalin-A (268 aa).

An N-terminal signal peptide occupies residues 1-24; sequence MARLLRLCTWLVALGPGLLATVQA. 3 cysteine pairs are disulfide-bonded: Cys26/Cys48, Cys30/Cys52, and Cys33/Cys65. The segment at 163–184 is disordered; that stretch reads TGDDRDRENHHQEGGDSDEGVS. A compositionally biased stretch (basic and acidic residues) spans 164 to 176; it reads GDDRDRENHHQEG. 2 consecutive propeptides follow at residues 197–208 and 218–228; these read SPQVEDEAKELQ and VGRPEWWMDYQ. A Phosphoserine modification is found at Ser252.

This sequence belongs to the opioid neuropeptide precursor family. Post-translationally, proenkephalin-A is cleaved by CTSL to generate Met-enkephalin. In terms of processing, processed and degraded by ACE. Probably cleaved by ACE. Post-translationally, processed by ACE to generate Met-enkephalin in the nucleus accumbens of the brain. In terms of processing, the N-terminal domain contains 6 conserved cysteines thought to be involved in disulfide bonding and/or processing.

It is found in the cytoplasmic vesicle. The protein resides in the secretory vesicle. The protein localises to the chromaffin granule lumen. It localises to the secreted. In terms of biological role, neuropeptide that competes with and mimic the effects of opiate drugs. They play a role in a number of physiologic functions, including pain perception and responses to stress. Its function is as follows. Met-enkephalin-Arg-Phe neuropeptide acts as a strong ligand of Mu-type opioid receptor OPRM1. Met-enkephalin-Arg-Phe-binding to OPRM1 in the nucleus accumbens of the brain increases activation of OPRM1, leading to long-term synaptic depression of glutamate release. Increases glutamate release in the striatum and decreases GABA concentration in the striatum. Functionally, increases glutamate release in the striatum. The sequence is that of Proenkephalin-A (PENK) from Cavia porcellus (Guinea pig).